We begin with the raw amino-acid sequence, 619 residues long: MKKNRAFNQVKKTKFDGRIKTSAKHQLRNVKTGVKDGVFIYKGPLTVSEFASKTNIAVANIIKHFFLNGLALTVNSVLTNEQLADACVNFGFDFKMETEVTHENIVANIQFEDSDDLLQPRPPIVTIMGHVDHGKTSLLDTIRKTNVTAKEFGGITQKIGAYQVKNHQNKTITFIDTPGHEAFTLMRARGAKVTDIVVLVVAADDGIKKQTEEAISHAKSANTPIIVFINKMDKPTANPDLVIQQLNKFDLVPEAWGGKTIFVMGSALTGQGINELLDNILLLGEVEGYQANYNAHSSGYAIEVQTSKGLGPIANVIVKRGTLKLGDIVVLGPAYGRVRTMHDENGNSLKQATPSKPVQISGFDIMPVAGEKFIVFDDEKDAKLIANKFKEQQKQKANNLTVNQTLKEQIKNKEIKILNLIFKADSDGSLQAIKQAVENINVAKISLSIIHAAVGQISESDIMLAKASGALLFSLNLGLSQTVKNIASLQGVKLEVHYHIPKLAEEIENILKGQLDPVYEEIEIGKAEVLQLWFHSKIGNIAGTIVKSGKIKRGNLCKLFRDKEIIFEGRIDSLKNEKTPVNLIETGKNCGIVINGCNDIKIGDIIVAYEKQIVKDGKL.

Residues 120–289 (PRPPIVTIMG…ILLLGEVEGY (170 aa)) form the tr-type G domain. The tract at residues 129-136 (GHVDHGKT) is G1. 129-136 (GHVDHGKT) is a binding site for GTP. The G2 stretch occupies residues 154 to 158 (GITQK). Residues 176 to 179 (DTPG) are G3. GTP-binding positions include 176–180 (DTPGH) and 230–233 (NKMD). The segment at 230 to 233 (NKMD) is G4. Positions 266 to 268 (SAL) are G5.

It belongs to the TRAFAC class translation factor GTPase superfamily. Classic translation factor GTPase family. IF-2 subfamily.

The protein localises to the cytoplasm. One of the essential components for the initiation of protein synthesis. Protects formylmethionyl-tRNA from spontaneous hydrolysis and promotes its binding to the 30S ribosomal subunits. Also involved in the hydrolysis of GTP during the formation of the 70S ribosomal complex. This chain is Translation initiation factor IF-2 (infB), found in Mycoplasma genitalium (strain ATCC 33530 / DSM 19775 / NCTC 10195 / G37) (Mycoplasmoides genitalium).